Here is a 381-residue protein sequence, read N- to C-terminus: E3 ubiquitin-protein ligase RNF13 (381 aa).

Positions 1–34 are cleaved as a signal peptide; that stretch reads MLLSIGMLMLSATQIYTIVTVQLFAFLNLLPVEA. Over 35–182 the chain is Lumenal; sequence DILAYNFENG…IPEFSLPLEY (148 aa). One can recognise a PA domain in the interval 64–160; it reads LKGFLINSKP…GEASANSLKE (97 aa). N-linked (GlcNAc...) asparagine glycosylation occurs at N88. Residues 183–203 form a helical membrane-spanning segment; the sequence is YLIPFLIIVGICLILIVIFMI. Residues 204–381 are Cytoplasmic-facing; that stretch reads TKFVQDRHRA…ERDYRVTNTV (178 aa). The segment at 240–282 adopts an RING-type; atypical zinc-finger fold; that stretch reads CAICLDEYEDGDKLRILPCSHAYHCKCVDPWLTKTKKTCPVCK. The tract at residues 285-381 is disordered; sequence VVPSQGDSDS…ERDYRVTNTV (97 aa). Acidic residues-rich tracts occupy residues 292-305 and 339-353; these read SDSE…ENEV and SEYE…DSSD. Residues 370–381 are compositionally biased toward basic and acidic residues; it reads NDERDYRVTNTV.

Widely expressed (at protein level). Lowest levels in the liver, moderate levels in the heart, intestine and spleen, and high levels in skeletal muscle, kidney, proventriculus and brain. Also expressed in inner ear after noise exposure.

Its subcellular location is the endoplasmic reticulum membrane. The protein localises to the late endosome membrane. It localises to the lysosome membrane. The protein resides in the nucleus inner membrane. It catalyses the reaction S-ubiquitinyl-[E2 ubiquitin-conjugating enzyme]-L-cysteine + [acceptor protein]-L-lysine = [E2 ubiquitin-conjugating enzyme]-L-cysteine + N(6)-ubiquitinyl-[acceptor protein]-L-lysine.. It functions in the pathway protein modification; protein ubiquitination. E3 ubiquitin-protein ligase that regulates cell proliferation. Involved in apoptosis regulation. Mediates ER stress-induced activation of JNK signaling pathway and apoptosis by promoting ERN1 activation and splicing of XBP1 mRNA. The protein is E3 ubiquitin-protein ligase RNF13 of Gallus gallus (Chicken).